The primary structure comprises 103 residues: Non-histone chromosomal protein HMG-14B (103 aa).

Residues 1–103 form a disordered region; that stretch reads MPKRKVAASR…AVEKEEVKSE (103 aa). Residues 29–50 are compositionally biased toward basic and acidic residues; that stretch reads VPDKAEPKAKALAAKDKSENKK. Residues 51–60 are compositionally biased toward basic residues; the sequence is AQSKGKKGPK. Residues 94 to 103 show a composition bias toward basic and acidic residues; sequence AVEKEEVKSE.

It belongs to the HMGN family.

The protein localises to the nucleus. Binds to the inner side of the nucleosomal DNA thus altering the interaction between the DNA and the histone octamer. May be involved in the process which maintains transcribable genes in a unique chromatin conformation. The protein is Non-histone chromosomal protein HMG-14B (HMG14) of Gallus gallus (Chicken).